Here is a 151-residue protein sequence, read N- to C-terminus: Meiotically up-regulated gene 114 protein (151 aa).

Its subcellular location is the cytoplasm. In terms of biological role, has a role in meiosis. This Schizosaccharomyces pombe (strain 972 / ATCC 24843) (Fission yeast) protein is Meiotically up-regulated gene 114 protein (mug114).